A 537-amino-acid chain; its full sequence is Oocyte zinc finger protein XlCOF29 (537 aa).

The disordered stretch occupies residues Met1–Glu21. C2H2-type zinc fingers lie at residues Phe375–His397, Phe403–His425, Phe431–His453, Tyr459–His481, Tyr487–His509, and Phe515–His537.

This sequence belongs to the krueppel C2H2-type zinc-finger protein family.

Its subcellular location is the nucleus. May be involved in transcriptional regulation. The polypeptide is Oocyte zinc finger protein XlCOF29 (Xenopus laevis (African clawed frog)).